We begin with the raw amino-acid sequence, 537 residues long: Glutamyl-tRNA reductase, chloroplastic (537 aa).

Residues 1-48 (MMASTTSATAAGGAFAAAKTRAGSSAAGGGACARVAAGGRRRSGVVVR) constitute a chloroplast transit peptide. Residues 134–137 (TCNR), S194, 199–201 (EGQ), and Q205 contribute to the substrate site. C135 serves as the catalytic Nucleophile. 276–281 (GAGKMG) serves as a coordination point for NADP(+).

This sequence belongs to the glutamyl-tRNA reductase family.

Its subcellular location is the plastid. It is found in the chloroplast. It carries out the reaction (S)-4-amino-5-oxopentanoate + tRNA(Glu) + NADP(+) = L-glutamyl-tRNA(Glu) + NADPH + H(+). Its pathway is porphyrin-containing compound metabolism; protoporphyrin-IX biosynthesis; 5-aminolevulinate from L-glutamyl-tRNA(Glu): step 1/2. Catalyzes the NADPH-dependent reduction of glutamyl-tRNA(Glu) to glutamate 1-semialdehyde (GSA). This Oryza sativa subsp. indica (Rice) protein is Glutamyl-tRNA reductase, chloroplastic.